The sequence spans 391 residues: uncharacterized protein (391 aa).

A helical transmembrane segment spans residues 4 to 24 (FALIVGIVALAIFSFLYIQLY).

The protein localises to the membrane. This is an uncharacterized protein from Haemophilus influenzae (strain ATCC 51907 / DSM 11121 / KW20 / Rd).